Consider the following 30-residue polypeptide: GSAIACGESCFKFKCYTPGCSCSYPICKKD.

A cross-link (cyclopeptide (Gly-Asp)) is located at residues 1–30 (GSAIACGESCFKFKCYTPGCSCSYPICKKD). Disulfide bonds link Cys6-Cys20, Cys10-Cys22, and Cys15-Cys27.

Post-translationally, this is a cyclic peptide. In terms of processing, contains 3 disulfide bonds.

Probably participates in a plant defense mechanism (Potential). Binds to and induces leakage in phospholipd membranes, particularly ones containing 1-palmitoyl-2-oleophosphatidylethanolamine (POPE). This is Cyclotide mela-5 from Melicytus latifolius (Norfolk Island mahoe).